The sequence spans 479 residues: Anaerobic nitric oxide reductase flavorubredoxin (479 aa).

The interval 30 to 210 (LRGSSYNSYL…PFSRLVTPKI (181 aa)) is zinc metallo-hydrolase. 6 residues coordinate Fe cation: His-79, Glu-81, Asp-83, His-147, Asp-166, and His-227. Positions 254 to 393 (ITIFYDTMSN…LCREHGREIA (140 aa)) constitute a Flavodoxin-like domain. FMN-binding positions include 260–264 (TMSNN) and 342–369 (AFGS…EMSL). One can recognise a Rubredoxin-like domain in the interval 423 to 474 (GPRMQCSVCQWIYDPAKGEPMQDVAPGTPWSEVPDNFLCPECSLGKDVFEEL). Residues Cys-428, Cys-431, Cys-461, and Cys-464 each contribute to the Fe cation site.

This sequence in the N-terminal section; belongs to the zinc metallo-hydrolase group 3 family. Homotetramer. It depends on Fe cation as a cofactor. FMN is required as a cofactor.

Its subcellular location is the cytoplasm. Its pathway is nitrogen metabolism; nitric oxide reduction. Functionally, anaerobic nitric oxide reductase; uses NADH to detoxify nitric oxide (NO), protecting several 4Fe-4S NO-sensitive enzymes. Has at least 2 reductase partners, only one of which (NorW, flavorubredoxin reductase) has been identified. NO probably binds to the di-iron center; electrons enter from the NorW at rubredoxin and are transferred sequentially to the FMN center and the di-iron center. Also able to function as an aerobic oxygen reductase. The protein is Anaerobic nitric oxide reductase flavorubredoxin of Shigella dysenteriae serotype 1 (strain Sd197).